Consider the following 636-residue polypeptide: Polyadenylate-binding protein 1 (636 aa).

Residue methionine 1 is modified to N-acetylmethionine. RRM domains lie at 11-89 (ASLY…WSQR), 99-175 (GNIF…RFKS), 191-268 (TNVY…RAQK), and 294-370 (VNLY…LAQR). A CSDE1-binding region spans residues 166-289 (RKVFVGRFKS…FEQMKQDRIT (124 aa)). Lysine 299 bears the N6-methyllysine mark. Serine 315 carries the phosphoserine modification. At threonine 319 the chain carries Phosphothreonine. 4 positions are modified to omega-N-methylarginine: arginine 385, arginine 419, arginine 432, and arginine 436. Residues arginine 455 and arginine 460 each carry the omega-N-methylated arginine; by CARM1 modification. Residues arginine 475 and arginine 481 each carry the omega-N-methylarginine modification. An Asymmetric dimethylarginine; alternate modification is found at arginine 493. Arginine 493 is subject to Dimethylated arginine; alternate. Arginine 493 bears the Omega-N-methylarginine; alternate mark. At arginine 506 the chain carries Omega-N-methylarginine. N6-acetyllysine is present on lysine 512. Arginine 518 is modified (omega-N-methylarginine). The region spanning 542 to 619 (QEPLTASMLA…AVAVLQAHQA (78 aa)) is the PABC domain.

Belongs to the polyadenylate-binding protein type-1 family. As to quaternary structure, may form homodimers. Component of a multisubunit autoregulatory ribonucleoprotein complex (ARC), at least composed of IGF2BP1, PABPC1 and CSDE1. Directly interacts with IGF2BP1. Part of a complex associated with the FOS mCRD domain and consisting of HNRPD, SYNCRIP, PAIP1 and CSDE1/UNR. Interacts with PAIP1 and PAIP2 (via the PABPC1-interacting motifs PAM1 and PAM2). Interacts with PAIP1 with a 1:1 stoichiometry and with PAIP2 with a 1:2 stoichiometry. The interaction with CSDE1 is direct and RNA-independent. Found in a mRNP complex with YBX2. Interacts with TENT2/GLD2. Identified in the spliceosome C complex. Identified in a mRNP complex, at least composed of DHX9, DDX3X, ELAVL1, HNRNPU, IGF2BP1, ILF3, PABPC1, PCBP2, PTBP2, STAU1, STAU2, SYNCRIP and YBX1. The interaction with DDX3X is direct and RNA-independent. This interaction increases in stressed cells and decreases during cell recovery. Identified in a IGF2BP1-dependent mRNP granule complex containing untranslated mRNAs. Interacts with NXF1/TAP. Interacts with PIWIL1. Interacts with AGO1, AGO2, GSPT1 and GSPT2. Interacts with LARP4B. Interacts (via the second and third RRM domains and the C-terminus) with PAIP2B (via central acidic portion and C-terminus). Forms a complex with LARP1 and SHFL. Interacts with LARP4. Interacts with ZFC3H1 in a RNase-sensitive manner. Interacts with TRIM71 (via NHL repeats) in an RNA-dependent manner. Interacts with TENT5C; the interaction has no effect on TENT5C poly(A) polymerase function. Interacts with G3BP1 and G3BP2. Interacts with ENDOV; the interaction is RNA-dependent and stimulates ENDOV activity. Interacts with UPF1; the interaction is RNA-dependent. Interacts with IGF2BP2 and IGF2BP3. May interact with SETX. Interacts with RBM46. Interacts with PAN3. Phosphorylated by MAPKAPK2. In terms of processing, methylated by CARM1. Arg-493 is dimethylated, probably to asymmetric dimethylarginine.

It localises to the cytoplasm. The protein localises to the stress granule. Its subcellular location is the nucleus. It is found in the cell projection. The protein resides in the lamellipodium. Functionally, binds the poly(A) tail of mRNA, including that of its own transcript, and regulates processes of mRNA metabolism such as pre-mRNA splicing and mRNA stability. Its function in translational initiation regulation can either be enhanced by PAIP1 or repressed by PAIP2. Can probably bind to cytoplasmic RNA sequences other than poly(A) in vivo. Binds to N6-methyladenosine (m6A)-containing mRNAs and contributes to MYC stability by binding to m6A-containing MYC mRNAs. Involved in translationally coupled mRNA turnover. Implicated with other RNA-binding proteins in the cytoplasmic deadenylation/translational and decay interplay of the FOS mRNA mediated by the major coding-region determinant of instability (mCRD) domain. Involved in regulation of nonsense-mediated decay (NMD) of mRNAs containing premature stop codons; for the recognition of premature termination codons (PTC) and initiation of NMD a competitive interaction between UPF1 and PABPC1 with the ribosome-bound release factors is proposed. By binding to long poly(A) tails, may protect them from uridylation by ZCCHC6/ZCCHC11 and hence contribute to mRNA stability. The polypeptide is Polyadenylate-binding protein 1 (PABPC1) (Bos taurus (Bovine)).